A 574-amino-acid chain; its full sequence is Isocitrate dehydrogenase kinase/phosphatase (574 aa).

ATP contacts are provided by residues 311–317 (APGIRGM) and K332. D367 is a catalytic residue.

Belongs to the AceK family.

The protein localises to the cytoplasm. The catalysed reaction is L-seryl-[isocitrate dehydrogenase] + ATP = O-phospho-L-seryl-[isocitrate dehydrogenase] + ADP + H(+). Functionally, bifunctional enzyme which can phosphorylate or dephosphorylate isocitrate dehydrogenase (IDH) on a specific serine residue. This is a regulatory mechanism which enables bacteria to bypass the Krebs cycle via the glyoxylate shunt in response to the source of carbon. When bacteria are grown on glucose, IDH is fully active and unphosphorylated, but when grown on acetate or ethanol, the activity of IDH declines drastically concomitant with its phosphorylation. The chain is Isocitrate dehydrogenase kinase/phosphatase from Shigella boydii serotype 4 (strain Sb227).